A 577-amino-acid chain; its full sequence is Moesin (577 aa).

Residues 2–295 (PKTISVRVTT…GNHELYMRRR (294 aa)) form the FERM domain. At Ser-74 the chain carries Phosphoserine. Lys-79 is modified (N6-acetyllysine). Position 83 is an N6-succinyllysine (Lys-83). The [IL]-x-C-x-x-[DE] motif signature appears at 115–120 (IYCPPE). Position 116 is a phosphotyrosine (Tyr-116). Cys-117 is subject to S-nitrosocysteine. Residues Lys-139 and Lys-165 each carry the N6-acetyllysine modification. Disordered stretches follow at residues 322 to 342 (LLEN…KIER), 358 to 419 (TKKA…QLAS), and 468 to 518 (STPH…NERV). Over residues 358–401 (TKKAQQELEEQTRRALELEQERKRAQSEAEKLAKERQEAEEAKE) the composition is skewed to basic and acidic residues. Residue Ser-407 is modified to Phosphoserine. A compositionally biased stretch (basic and acidic residues) spans 492–518 (AELRADAMAKDRSEEERTTEAEKNERV). Residue Ser-527 is modified to Phosphoserine. Residue Thr-558 is modified to Phosphothreonine; by ROCK2 and STK10.

As to quaternary structure, in resting T-cells, part of a PAG1-NHERF1-MSN complex which is disrupted upon TCR activation. Interacts with NHERF1. Interacts with PPP1R16B. Interacts with SELPLG and SYK; these interactions mediate the activation of SYK by SELPLG. Interacts with PDPN (via cytoplasmic domain); this interaction activates RHOA and promotes epithelial-mesenchymal transition. Interacts with SPN/CD43 cytoplasmic tail. Interacts with CD44. Interacts with ICAM2. Interacts with ICAM3 (via C-terminus). Interacts with PDZD8. Interacts with F-actin. Interacts with CD46. Interacts with PTPN6. Phosphorylation on Thr-558 by STK10 negatively regulates lymphocyte migration and polarization. Phosphorylation on Thr-558 is crucial for the formation of microvilli-like structures. Phosphorylation by ROCK2 suppresses the head-to-tail association of the N-terminal and C-terminal halves resulting in an opened conformation which is capable of actin and membrane-binding. Post-translationally, S-nitrosylation of Cys-117 is induced by interferon-gamma and oxidatively-modified low-densitity lipoprotein (LDL(ox)) implicating the iNOS-S100A8/9 transnitrosylase complex.

The protein localises to the cell membrane. It localises to the cytoplasm. Its subcellular location is the cytoskeleton. It is found in the apical cell membrane. The protein resides in the cell projection. The protein localises to the microvillus membrane. It localises to the microvillus. Its function is as follows. Ezrin-radixin-moesin (ERM) family protein that connects the actin cytoskeleton to the plasma membrane and thereby regulates the structure and function of specific domains of the cell cortex. Tethers actin filaments by oscillating between a resting and an activated state providing transient interactions between moesin and the actin cytoskeleton. Once phosphorylated on its C-terminal threonine, moesin is activated leading to interaction with F-actin and cytoskeletal rearrangement. These rearrangements regulate many cellular processes, including cell shape determination, membrane transport, and signal transduction. The role of moesin is particularly important in immunity acting on both T and B-cells homeostasis and self-tolerance, regulating lymphocyte egress from lymphoid organs. Modulates phagolysosomal biogenesis in macrophages. Also participates in immunologic synapse formation. This Mus musculus (Mouse) protein is Moesin.